The primary structure comprises 291 residues: Protein-export membrane protein SecF (291 aa).

6 helical membrane-spanning segments follow: residues Leu-19–Val-39, Leu-134–Phe-154, Val-156–Ala-176, Leu-187–Asn-209, Met-226–Val-246, and Ala-256–Leu-278.

This sequence belongs to the SecD/SecF family. SecF subfamily. As to quaternary structure, part of the protein translocation apparatus. Forms a complex with SecD.

The protein resides in the cell membrane. In terms of biological role, involved in protein export. The sequence is that of Protein-export membrane protein SecF from Haloquadratum walsbyi (strain DSM 16790 / HBSQ001).